Reading from the N-terminus, the 697-residue chain is DNA ligase (697 aa).

NAD(+) is bound by residues 41–45 (DPVYD), 90–91 (SL), and Glu-129. The active-site N6-AMP-lysine intermediate is Lys-131. NAD(+)-binding residues include Arg-152, Glu-189, Lys-308, and Lys-332. Zn(2+)-binding residues include Cys-426, Cys-429, Cys-444, and Cys-449. One can recognise a BRCT domain in the interval 617–697 (AANHHLTGST…ALQNMLRGST (81 aa)).

The protein belongs to the NAD-dependent DNA ligase family. LigA subfamily. Requires Mg(2+) as cofactor. Mn(2+) is required as a cofactor.

It carries out the reaction NAD(+) + (deoxyribonucleotide)n-3'-hydroxyl + 5'-phospho-(deoxyribonucleotide)m = (deoxyribonucleotide)n+m + AMP + beta-nicotinamide D-nucleotide.. Functionally, DNA ligase that catalyzes the formation of phosphodiester linkages between 5'-phosphoryl and 3'-hydroxyl groups in double-stranded DNA using NAD as a coenzyme and as the energy source for the reaction. It is essential for DNA replication and repair of damaged DNA. This Synechococcus sp. (strain CC9311) protein is DNA ligase.